The chain runs to 342 residues: tRNA N6-adenosine threonylcarbamoyltransferase (342 aa).

Fe cation is bound by residues His-112 and His-116. Substrate-binding positions include 134 to 138, Asp-167, Gly-180, and Asn-280; that span reads LASGG. Asp-308 lines the Fe cation pocket.

This sequence belongs to the KAE1 / TsaD family. It depends on Fe(2+) as a cofactor.

Its subcellular location is the cytoplasm. The enzyme catalyses L-threonylcarbamoyladenylate + adenosine(37) in tRNA = N(6)-L-threonylcarbamoyladenosine(37) in tRNA + AMP + H(+). In terms of biological role, required for the formation of a threonylcarbamoyl group on adenosine at position 37 (t(6)A37) in tRNAs that read codons beginning with adenine. Is involved in the transfer of the threonylcarbamoyl moiety of threonylcarbamoyl-AMP (TC-AMP) to the N6 group of A37, together with TsaE and TsaB. TsaD likely plays a direct catalytic role in this reaction. In Rickettsia canadensis (strain McKiel), this protein is tRNA N6-adenosine threonylcarbamoyltransferase.